The chain runs to 208 residues: Thioredoxin domain-containing protein 9 (208 aa).

One can recognise a Thioredoxin domain in the interval 68–179 (YEEVADEKEF…MENRLARSEV (112 aa)).

In terms of tissue distribution, expressed throughout the body with high expression in the nervous system, including the ventral nerve cord and tail neurons, and vulva.

It is found in the nucleus. The protein localises to the cytoplasm. Required for normal microtubule organization and function. Regulates tubulin acetylation in ALM and PLM neurons. The protein is Thioredoxin domain-containing protein 9 of Caenorhabditis elegans.